An 892-amino-acid polypeptide reads, in one-letter code: Alanine--tRNA ligase (892 aa).

The Zn(2+) site is built by H574, H578, C676, and H680.

The protein belongs to the class-II aminoacyl-tRNA synthetase family. Requires Zn(2+) as cofactor.

It localises to the cytoplasm. It catalyses the reaction tRNA(Ala) + L-alanine + ATP = L-alanyl-tRNA(Ala) + AMP + diphosphate. Catalyzes the attachment of alanine to tRNA(Ala) in a two-step reaction: alanine is first activated by ATP to form Ala-AMP and then transferred to the acceptor end of tRNA(Ala). Also edits incorrectly charged Ser-tRNA(Ala) and Gly-tRNA(Ala) via its editing domain. This Prochlorococcus marinus (strain MIT 9303) protein is Alanine--tRNA ligase.